Reading from the N-terminus, the 442-residue chain is Protein PRRC1-B (442 aa).

The tract at residues 1 to 24 (MMEESGIETTPPSTPPPSTIGTSV) is disordered.

Belongs to the PRRC1 family.

Its subcellular location is the golgi apparatus. The polypeptide is Protein PRRC1-B (prrc1-b) (Xenopus laevis (African clawed frog)).